Consider the following 434-residue polypeptide: Gamma-glutamyl phosphate reductase (434 aa).

Polar residues predominate over residues 1–11 (MTNSNEAQENA). The tract at residues 1-26 (MTNSNEAQENALSPERQAERDEVLAK) is disordered. Positions 16 to 25 (RQAERDEVLA) are enriched in basic and acidic residues.

The protein belongs to the gamma-glutamyl phosphate reductase family.

It is found in the cytoplasm. It carries out the reaction L-glutamate 5-semialdehyde + phosphate + NADP(+) = L-glutamyl 5-phosphate + NADPH + H(+). Its pathway is amino-acid biosynthesis; L-proline biosynthesis; L-glutamate 5-semialdehyde from L-glutamate: step 2/2. Catalyzes the NADPH-dependent reduction of L-glutamate 5-phosphate into L-glutamate 5-semialdehyde and phosphate. The product spontaneously undergoes cyclization to form 1-pyrroline-5-carboxylate. This is Gamma-glutamyl phosphate reductase from Corynebacterium jeikeium (strain K411).